Here is a 435-residue protein sequence, read N- to C-terminus: 5-hydroxybenzimidazole synthase (435 aa).

Substrate is bound by residues methionine 95, tyrosine 124, histidine 163, 186 to 188 (SKG), 227 to 230 (NGLR), and glutamate 266. Histidine 270 contributes to the Zn(2+) binding site. Position 293 (tyrosine 293) interacts with substrate. Histidine 334 is a binding site for Zn(2+). Residues cysteine 410, cysteine 413, and cysteine 417 each coordinate [4Fe-4S] cluster.

The protein belongs to the ThiC family. 5-hydroxybenzimidazole synthase subfamily. Homodimer. It depends on [4Fe-4S] cluster as a cofactor.

It catalyses the reaction 5-amino-1-(5-phospho-beta-D-ribosyl)imidazole + AH2 + S-adenosyl-L-methionine = 5-hydroxybenzimidazole + 5'-deoxyadenosine + formate + L-methionine + A + NH4(+) + phosphate + 2 H(+). Its function is as follows. Catalyzes the conversion of aminoimidazole ribotide (AIR) to 5-hydroxybenzimidazole (5-HBI) in a radical S-adenosyl-L-methionine (SAM)-dependent reaction. Is thus involved in the anaerobic biosynthesis of the benzimidazole lower axial ligand of the cobamide produced by G.metallireducens. The chain is 5-hydroxybenzimidazole synthase from Geobacter metallireducens (strain ATCC 53774 / DSM 7210 / GS-15).